We begin with the raw amino-acid sequence, 466 residues long: Ribulose bisphosphate carboxylase large chain (466 aa).

An N6,N6,N6-trimethyllysine modification is found at Lys-5. Residues Asn-114 and Thr-164 each contribute to the substrate site. Lys-166 serves as the catalytic Proton acceptor. Residue Lys-168 participates in substrate binding. Residues Lys-192, Asp-194, and Glu-195 each contribute to the Mg(2+) site. Lys-192 is modified (N6-carboxylysine). The Proton acceptor role is filled by His-285. Substrate is bound by residues Arg-286, His-318, and Ser-370.

This sequence belongs to the RuBisCO large chain family. Type I subfamily. Heterohexadecamer of 8 large chains and 8 small chains; disulfide-linked. The disulfide link is formed within the large subunit homodimers. The cofactor is Mg(2+). Post-translationally, the disulfide bond which can form in the large chain dimeric partners within the hexadecamer appears to be associated with oxidative stress and protein turnover.

Its subcellular location is the plastid. It is found in the chloroplast. The catalysed reaction is 2 (2R)-3-phosphoglycerate + 2 H(+) = D-ribulose 1,5-bisphosphate + CO2 + H2O. The enzyme catalyses D-ribulose 1,5-bisphosphate + O2 = 2-phosphoglycolate + (2R)-3-phosphoglycerate + 2 H(+). RuBisCO catalyzes two reactions: the carboxylation of D-ribulose 1,5-bisphosphate, the primary event in carbon dioxide fixation, as well as the oxidative fragmentation of the pentose substrate in the photorespiration process. Both reactions occur simultaneously and in competition at the same active site. This chain is Ribulose bisphosphate carboxylase large chain, found in Drosera capensis (Cape sundew).